The primary structure comprises 797 residues: MAP/microtubule affinity-regulating kinase 3 (797 aa).

The interval 1–35 is disordered; that stretch reads MSTRTPLPTVNERDTENHISHGDGRQEVTSRTGRS. Positions 11–28 are enriched in basic and acidic residues; it reads NERDTENHISHGDGRQEV. Ser-42 bears the Phosphoserine mark. Residues 56 to 307 form the Protein kinase domain; the sequence is YRLLKTIGKG…LEQIMKDRWI (252 aa). ATP is bound by residues 62 to 70 and Lys-85; that span reads IGKGNFAKV. The active-site Proton acceptor is Asp-178. Residue Thr-211 is modified to Phosphothreonine; by LKB1. In terms of domain architecture, UBA spans 326–365; that stretch reads ISDQKRIDIMVGMGYSQEEIQESLSKMKYDEITATYLLLG. Residues Ser-368, Ser-374, Ser-376, Ser-380, Ser-383, Ser-400, Ser-419, and Ser-469 each carry the phosphoserine modification. Disordered regions lie at residues 372–504 and 585–701; these read DASD…GMTR and PDQR…KPRS. A compositionally biased stretch (low complexity) spans 374-385; it reads SDSSSSSNLSLA. A compositionally biased stretch (polar residues) spans 391 to 400; the sequence is SDLSNSTGQS. 2 stretches are compositionally biased toward polar residues: residues 492–504 and 585–602; these read VPSSNAASGGMTR and PDQRTPVASTHSISSATT. Phosphoserine occurs at positions 593 and 596. The residue at position 602 (Thr-602) is a Phosphothreonine. The residue at position 617 (Thr-617) is a Phosphothreonine; by PKC/PRKCZ. Phosphoserine occurs at positions 636, 651, and 654. The span at 637–664 shows a compositional bias: polar residues; sequence PSLSHEATPLSQTRSRGSTNLFSKLTSK. Residues 669–678 show a composition bias toward basic and acidic residues; that stretch reads LPTEYERNGR. Position 687 is a phosphoserine (Ser-687). Residues 689–699 are compositionally biased toward basic and acidic residues; the sequence is EQKDENREAKP. Positions 748 to 797 constitute a KA1 domain; sequence DGHAESLVQWEMEVCKLPRLSLNGVRFKRISGTSIAFKNIASKIANELKL.

It belongs to the protein kinase superfamily. CAMK Ser/Thr protein kinase family. SNF1 subfamily. Interacts with MAPT/TAU. Interacts with DLG5 (via coiled-coil domain). Interacts with STK3/MST2 and STK4/MST1 in the presence of DLG5. Interacts with YWHAB, YWHAG, YWHAQ and YWHAZ. Interacts with PKP2 (via N-terminus). Interacts with CDC25C. Interacts with KSR1. Phosphorylated at Thr-211 by STK11/LKB1 in complex with STE20-related adapter-alpha (STRADA) pseudo kinase and CAB39. Phosphorylation at Thr-617 by PRKCZ/aPKC inhibits the kinase activity.

Its subcellular location is the cell membrane. The protein resides in the cell projection. It localises to the dendrite. The protein localises to the cytoplasm. The enzyme catalyses L-seryl-[protein] + ATP = O-phospho-L-seryl-[protein] + ADP + H(+). It catalyses the reaction L-threonyl-[protein] + ATP = O-phospho-L-threonyl-[protein] + ADP + H(+). With respect to regulation, activated by phosphorylation on Thr-211. Inhibited by phosphorylation on Thr-617. Serine/threonine-protein kinase. Involved in the specific phosphorylation of microtubule-associated proteins for MAP2 and MAP4. Phosphorylates the microtubule-associated protein MAPT/TAU. Phosphorylates CDC25C on 'Ser-216'. Regulates localization and activity of some histone deacetylases by mediating phosphorylation of HDAC7, promoting subsequent interaction between HDAC7 and 14-3-3 and export from the nucleus. Regulates localization and activity of MITF by mediating its phosphorylation, promoting subsequent interaction between MITF and 14-3-3 and retention in the cytosol. Negatively regulates the Hippo signaling pathway and antagonizes the phosphorylation of LATS1. Cooperates with DLG5 to inhibit the kinase activity of STK3/MST2 toward LATS1. Phosphorylates PKP2 and KSR1. The polypeptide is MAP/microtubule affinity-regulating kinase 3 (Mark3) (Rattus norvegicus (Rat)).